The following is a 205-amino-acid chain: TATA-box-binding protein (205 aa).

Repeat copies occupy residues 27–103 (LQNI…ARII) and 117–194 (IQNI…YPVL).

The protein belongs to the TBP family. In terms of assembly, belongs to the TFIID complex together with the TBP-associated factors (TAFs). Binds DNA as monomer.

The protein resides in the nucleus. Functionally, general transcription factor that functions at the core of the DNA-binding multiprotein factor TFIID. Binding of TFIID to the TATA box is the initial transcriptional step of the pre-initiation complex (PIC), playing a role in the activation of eukaryotic genes transcribed by RNA polymerase II. This chain is TATA-box-binding protein (tbpA), found in Dictyostelium discoideum (Social amoeba).